The sequence spans 417 residues: Serine hydroxymethyltransferase (417 aa).

(6S)-5,6,7,8-tetrahydrofolate contacts are provided by residues L121 and 125 to 127 (GHL). The residue at position 229 (K229) is an N6-(pyridoxal phosphate)lysine. (6S)-5,6,7,8-tetrahydrofolate is bound at residue 355–357 (SPF).

It belongs to the SHMT family. Homodimer. It depends on pyridoxal 5'-phosphate as a cofactor.

The protein resides in the cytoplasm. It catalyses the reaction (6R)-5,10-methylene-5,6,7,8-tetrahydrofolate + glycine + H2O = (6S)-5,6,7,8-tetrahydrofolate + L-serine. The protein operates within one-carbon metabolism; tetrahydrofolate interconversion. It participates in amino-acid biosynthesis; glycine biosynthesis; glycine from L-serine: step 1/1. Functionally, catalyzes the reversible interconversion of serine and glycine with tetrahydrofolate (THF) serving as the one-carbon carrier. This reaction serves as the major source of one-carbon groups required for the biosynthesis of purines, thymidylate, methionine, and other important biomolecules. Also exhibits THF-independent aldolase activity toward beta-hydroxyamino acids, producing glycine and aldehydes, via a retro-aldol mechanism. This chain is Serine hydroxymethyltransferase, found in Aeromonas hydrophila subsp. hydrophila (strain ATCC 7966 / DSM 30187 / BCRC 13018 / CCUG 14551 / JCM 1027 / KCTC 2358 / NCIMB 9240 / NCTC 8049).